A 447-amino-acid chain; its full sequence is Keratin, type I cytoskeletal 15 (447 aa).

Residues 1 to 93 form a head region; it reads MATTFLQTSS…GGDGGLLSGN (93 aa). 4 positions are modified to phosphoserine: Ser16, Ser28, Ser33, and Ser47. A coil 1A region spans residues 94 to 129; the sequence is EKVTMQNLNDRLASYLDKVRALEEANTELEVKIRDW. The 313-residue stretch at 94-406 folds into the IF rod domain; that stretch reads EKVTMQNLND…NLLEGQDAKM (313 aa). Phosphothreonine is present on Thr120. A linker 1 region spans residues 130–148; it reads YQKQSPASPDRDYSHYFKT. The tract at residues 149–240 is coil 1B; it reads MEEIRDKILA…KNHEEEMKEF (92 aa). The segment at 241-260 is linker 12; that stretch reads SSQLAGQVNVEMDAAPGVDL. A coil 2 region spans residues 261-402; it reads TRMLAEMREQ…STYRNLLEGQ (142 aa). A Glycyl lysine isopeptide (Lys-Gly) (interchain with G-Cter in SUMO2) cross-link involves residue Lys289. Thr290 and Thr312 each carry phosphothreonine. A tail region spans residues 403–447; it reads DAKMAAIGVREASLRGGSSGGGSNFHISVEESVDGKVVSSRKRES. Lys438 participates in a covalent cross-link: Glycyl lysine isopeptide (Lys-Gly) (interchain with G-Cter in SUMO1); alternate. Lys438 participates in a covalent cross-link: Glycyl lysine isopeptide (Lys-Gly) (interchain with G-Cter in SUMO2); alternate.

The protein belongs to the intermediate filament family. In terms of assembly, heterotetramer of two type I and two type II keratins. Forms a heterodimer with KRT14. Interacts with NOD2.

In Rattus norvegicus (Rat), this protein is Keratin, type I cytoskeletal 15.